We begin with the raw amino-acid sequence, 537 residues long: Chaperonin GroEL 1 (537 aa).

Residues 29 to 32, 86 to 90, glycine 413, and aspartate 494 contribute to the ATP site; these read TLGP and DGTTT.

This sequence belongs to the chaperonin (HSP60) family. As to quaternary structure, forms a cylinder of 14 subunits composed of two heptameric rings stacked back-to-back. Interacts with the co-chaperonin GroES.

It localises to the cytoplasm. The catalysed reaction is ATP + H2O + a folded polypeptide = ADP + phosphate + an unfolded polypeptide.. Together with its co-chaperonin GroES, plays an essential role in assisting protein folding. The GroEL-GroES system forms a nano-cage that allows encapsulation of the non-native substrate proteins and provides a physical environment optimized to promote and accelerate protein folding. This Mycobacterium leprae (strain TN) protein is Chaperonin GroEL 1.